A 282-amino-acid chain; its full sequence is Bifunctional protein FolD (282 aa).

Residues 166–168 (GRS) and Ser-191 contribute to the NADP(+) site.

Belongs to the tetrahydrofolate dehydrogenase/cyclohydrolase family. As to quaternary structure, homodimer.

It catalyses the reaction (6R)-5,10-methylene-5,6,7,8-tetrahydrofolate + NADP(+) = (6R)-5,10-methenyltetrahydrofolate + NADPH. The catalysed reaction is (6R)-5,10-methenyltetrahydrofolate + H2O = (6R)-10-formyltetrahydrofolate + H(+). The protein operates within one-carbon metabolism; tetrahydrofolate interconversion. Its function is as follows. Catalyzes the oxidation of 5,10-methylenetetrahydrofolate to 5,10-methenyltetrahydrofolate and then the hydrolysis of 5,10-methenyltetrahydrofolate to 10-formyltetrahydrofolate. This Acidovorax sp. (strain JS42) protein is Bifunctional protein FolD.